The following is a 432-amino-acid chain: Trigger factor (432 aa).

A PPIase FKBP-type domain is found at 161 to 246; the sequence is EDRVTIDFSG…LKKVEERELP (86 aa).

This sequence belongs to the FKBP-type PPIase family. Tig subfamily.

It is found in the cytoplasm. It carries out the reaction [protein]-peptidylproline (omega=180) = [protein]-peptidylproline (omega=0). Its function is as follows. Involved in protein export. Acts as a chaperone by maintaining the newly synthesized protein in an open conformation. Functions as a peptidyl-prolyl cis-trans isomerase. The polypeptide is Trigger factor (Enterobacter sp. (strain 638)).